We begin with the raw amino-acid sequence, 388 residues long: Succinate--CoA ligase [ADP-forming] subunit beta (388 aa).

Residues 9–244 (KQLFAEYGLP…PSQEDSREAH (236 aa)) form the ATP-grasp domain. Residues lysine 46, 53–55 (GRG), glutamate 99, threonine 102, and glutamate 107 each bind ATP. Residues asparagine 199 and aspartate 213 each coordinate Mg(2+). Residues asparagine 264 and 321 to 323 (GIV) contribute to the substrate site.

This sequence belongs to the succinate/malate CoA ligase beta subunit family. Heterotetramer of two alpha and two beta subunits. Mg(2+) is required as a cofactor.

It carries out the reaction succinate + ATP + CoA = succinyl-CoA + ADP + phosphate. It catalyses the reaction GTP + succinate + CoA = succinyl-CoA + GDP + phosphate. Its pathway is carbohydrate metabolism; tricarboxylic acid cycle; succinate from succinyl-CoA (ligase route): step 1/1. In terms of biological role, succinyl-CoA synthetase functions in the citric acid cycle (TCA), coupling the hydrolysis of succinyl-CoA to the synthesis of either ATP or GTP and thus represents the only step of substrate-level phosphorylation in the TCA. The beta subunit provides nucleotide specificity of the enzyme and binds the substrate succinate, while the binding sites for coenzyme A and phosphate are found in the alpha subunit. This is Succinate--CoA ligase [ADP-forming] subunit beta from Pseudoalteromonas translucida (strain TAC 125).